The sequence spans 922 residues: 1,4-alpha-glucan-branching enzyme 1, chloroplastic/amyloplastic (922 aa).

A chloroplast-targeting transit peptide spans 1-47; it reads MVYTISGIRFPVLPSLHKSTLRCDRRASSHSFFLKNNSSSFSRTSLY. Positions 83-130 are disordered; it reads LENPDITSEDAQNLEDLTMKDGNKYNIDESTSSYREVGDEKGSVTSSS. Residues 99 to 109 show a composition bias toward basic and acidic residues; that stretch reads LTMKDGNKYNI. D494 functions as the Nucleophile in the catalytic mechanism. E549 (proton donor) is an active-site residue. Residues 870–922 form a disordered region; the sequence is VESEPIELSVEEAESEPIERSVEEVESETTQQSVEVESETTQQSVEVESETTQ. The span at 897-922 shows a compositional bias: low complexity; it reads ETTQQSVEVESETTQQSVEVESETTQ.

It belongs to the glycosyl hydrolase 13 family. GlgB subfamily. Monomer. In terms of tissue distribution, expressed in roots, leaves, stipules, pods and flowers.

The protein resides in the plastid. It is found in the chloroplast. Its subcellular location is the amyloplast. The catalysed reaction is Transfers a segment of a (1-&gt;4)-alpha-D-glucan chain to a primary hydroxy group in a similar glucan chain.. The protein operates within glycan biosynthesis; starch biosynthesis. In terms of biological role, catalyzes the formation of the alpha-1,6-glucosidic linkages in starch by scission of a 1,4-alpha-linked oligosaccharide from growing alpha-1,4-glucan chains and the subsequent attachment of the oligosaccharide to the alpha-1,6 position. May preferentially transfer short chains during branching. Responsible for the synthesis of about 75% of the amylopectin found in the starch granules of mature embryos. The polypeptide is 1,4-alpha-glucan-branching enzyme 1, chloroplastic/amyloplastic (SBEI) (Pisum sativum (Garden pea)).